A 252-amino-acid chain; its full sequence is UPF0246 protein AM1_4276 (252 aa).

It belongs to the UPF0246 family.

The chain is UPF0246 protein AM1_4276 from Acaryochloris marina (strain MBIC 11017).